The sequence spans 149 residues: Large ribosomal subunit protein uL22c (149 aa).

The protein belongs to the universal ribosomal protein uL22 family. In terms of assembly, part of the 50S ribosomal subunit.

The protein resides in the plastid. The protein localises to the chloroplast. This protein binds specifically to 23S rRNA. In terms of biological role, the globular domain of the protein is located near the polypeptide exit tunnel on the outside of the subunit, while an extended beta-hairpin is found that lines the wall of the exit tunnel in the center of the 70S ribosome. This is Large ribosomal subunit protein uL22c (rpl22) from Brachypodium distachyon (Purple false brome).